The following is a 128-amino-acid chain: Ribosome-binding factor A (128 aa).

It belongs to the RbfA family. As to quaternary structure, monomer. Binds 30S ribosomal subunits, but not 50S ribosomal subunits or 70S ribosomes.

It localises to the cytoplasm. In terms of biological role, one of several proteins that assist in the late maturation steps of the functional core of the 30S ribosomal subunit. Associates with free 30S ribosomal subunits (but not with 30S subunits that are part of 70S ribosomes or polysomes). Required for efficient processing of 16S rRNA. May interact with the 5'-terminal helix region of 16S rRNA. The protein is Ribosome-binding factor A of Haemophilus influenzae (strain ATCC 51907 / DSM 11121 / KW20 / Rd).